A 273-amino-acid chain; its full sequence is Dermonecrotic toxin LarSicTox-alphaIB1aiv (273 aa).

The active site involves histidine 5. Glutamate 25 and aspartate 27 together coordinate Mg(2+). Residue histidine 41 is the Nucleophile of the active site. 2 cysteine pairs are disulfide-bonded: cysteine 45-cysteine 51 and cysteine 47-cysteine 190. Position 85 (aspartate 85) interacts with Mg(2+). Asparagine 250 is a glycosylation site (N-linked (GlcNAc...) asparagine).

It belongs to the arthropod phospholipase D family. Class II subfamily. Mg(2+) is required as a cofactor. As to expression, expressed by the venom gland.

Its subcellular location is the secreted. The enzyme catalyses an N-(acyl)-sphingosylphosphocholine = an N-(acyl)-sphingosyl-1,3-cyclic phosphate + choline. It carries out the reaction an N-(acyl)-sphingosylphosphoethanolamine = an N-(acyl)-sphingosyl-1,3-cyclic phosphate + ethanolamine. The catalysed reaction is a 1-acyl-sn-glycero-3-phosphocholine = a 1-acyl-sn-glycero-2,3-cyclic phosphate + choline. It catalyses the reaction a 1-acyl-sn-glycero-3-phosphoethanolamine = a 1-acyl-sn-glycero-2,3-cyclic phosphate + ethanolamine. Functionally, dermonecrotic toxins cleave the phosphodiester linkage between the phosphate and headgroup of certain phospholipids (sphingolipid and lysolipid substrates), forming an alcohol (often choline) and a cyclic phosphate. This toxin acts on sphingomyelin (SM). It may also act on ceramide phosphoethanolamine (CPE), lysophosphatidylcholine (LPC) and lysophosphatidylethanolamine (LPE), but not on lysophosphatidylserine (LPS), and lysophosphatidylglycerol (LPG). It acts by transphosphatidylation, releasing exclusively cyclic phosphate products as second products. Induces dermonecrosis, hemolysis, increased vascular permeability, edema, inflammatory response, and platelet aggregation. The chain is Dermonecrotic toxin LarSicTox-alphaIB1aiv from Loxosceles arizonica (Arizona brown spider).